The following is a 385-amino-acid chain: Putative transporter YthQ (385 aa).

Helical transmembrane passes span 24–44 (AVID…FVIY), 67–87 (WLYA…FLME), 106–128 (YALL…IVLP), 133–155 (SVLI…HIFF), 176–193 (TLVR…IVFT), 197–214 (LLAL…IRSL), 304–324 (AFTV…LLVY), and 365–385 (ILHY…LLFT).

Its subcellular location is the cell membrane. The protein is Putative transporter YthQ (ythQ) of Bacillus subtilis (strain 168).